Consider the following 223-residue polypeptide: Protein NrfC (223 aa).

Residues 1-27 (MTWSRRQFLTGVGVLAAVSGTAGRVVA) constitute a signal peptide (tat-type signal). 4Fe-4S ferredoxin-type domains follow at residues 37-65 (YGMVHDESLCIGCTACMDACREVNKVPEG), 83-114 (VKYRFFRKSCQHCDHAPCVDVCPTGASFRDAA), and 116-145 (GIVDVNPDLCVGCQYCIAACPYRVRFIHPV). Residues C46, C49, C52, C56, C92, C95, C100, C104, C125, C128, C131, C135, C152, C155, C168, and C172 each coordinate [4Fe-4S] cluster.

Post-translationally, predicted to be exported by the Tat system. The position of the signal peptide cleavage has not been experimentally proven.

Functionally, probably involved in the transfer of electrons from the quinone pool to the type-c cytochromes. The sequence is that of Protein NrfC (nrfC) from Escherichia coli O157:H7.